The primary structure comprises 164 residues: 3-hydroxyacyl-[acyl-carrier-protein] dehydratase FabZ (164 aa).

His-61 is an active-site residue.

The protein belongs to the thioester dehydratase family. FabZ subfamily.

Its subcellular location is the cytoplasm. It catalyses the reaction a (3R)-hydroxyacyl-[ACP] = a (2E)-enoyl-[ACP] + H2O. In terms of biological role, involved in unsaturated fatty acids biosynthesis. Catalyzes the dehydration of short chain beta-hydroxyacyl-ACPs and long chain saturated and unsaturated beta-hydroxyacyl-ACPs. The sequence is that of 3-hydroxyacyl-[acyl-carrier-protein] dehydratase FabZ from Ralstonia nicotianae (strain ATCC BAA-1114 / GMI1000) (Ralstonia solanacearum).